The sequence spans 425 residues: 5-hydroxytryptamine receptor 7 (425 aa).

At 1–72 (MLIQVQPSHL…LLYGDTEKIV (72 aa)) the chain is on the extracellular side. Residues N14, N41, and N51 are each glycosylated (N-linked (GlcNAc...) asparagine). A helical transmembrane segment spans residues 73-97 (IGVVLSIITLFTIAGNALVIISVCI). The Cytoplasmic segment spans residues 98–107 (VKKLRQPSNY). A helical membrane pass occupies residues 108–129 (LVVSLAAADLSVAVAVMPFVII). Residues 130 to 141 (TDLVGGEWLFGK) are Extracellular-facing. A helical membrane pass occupies residues 142 to 167 (VFCNVFIAMDVMCCTASIMTLCVISV). A disulfide bridge connects residues C144 and C220. D151 lines the serotonin pocket. Topologically, residues 168-187 (DRYLGITRPLTYPARQNGKL) are cytoplasmic. The chain crosses the membrane as a helical span at residues 188–208 (MAKMVFIVWLLSASITLPPLF). Topologically, residues 209–226 (GWAKNVNVERVCLISQDF) are extracellular. A helical membrane pass occupies residues 227-249 (GYTVYSTAVAFYIPMTVMLVMYQ). Over 250–322 (RIFVAAKISA…SIFKREQKAA (73 aa)) the chain is Cytoplasmic. A helical membrane pass occupies residues 323-348 (RTLGIIVGAFTFCWLPFFLLSTARPF). Topologically, residues 349 to 359 (ICGIMCSCMPL) are extracellular. A helical membrane pass occupies residues 360 to 383 (RLERTLLWLGYTNSLINPLIYAFF). The Cytoplasmic segment spans residues 384-425 (NRDLRTTFWNLLRCKYTNINRRLSAASMHEALKVTERHEGIL). C397 is lipidated: S-palmitoyl cysteine.

It belongs to the G-protein coupled receptor 1 family.

The protein localises to the cell membrane. G-protein coupled receptor for 5-hydroxytryptamine (serotonin), a biogenic hormone that functions as a neurotransmitter, a hormone and a mitogen. Ligand binding causes a conformation change that triggers signaling via guanine nucleotide-binding proteins (G proteins) and modulates the activity of downstream effectors. HTR7 is coupled to G(s) G alpha proteins and mediates activation of adenylate cyclase activity. This is 5-hydroxytryptamine receptor 7 (htr7) from Xenopus laevis (African clawed frog).